Consider the following 213-residue polypeptide: Redox-sensing transcriptional repressor Rex (213 aa).

A DNA-binding region (H-T-H motif) is located at residues L17 to F56. Residue G91 to G96 coordinates NAD(+).

This sequence belongs to the transcriptional regulatory Rex family. As to quaternary structure, homodimer.

It is found in the cytoplasm. Modulates transcription in response to changes in cellular NADH/NAD(+) redox state. This Streptococcus uberis (strain ATCC BAA-854 / 0140J) protein is Redox-sensing transcriptional repressor Rex.